Consider the following 212-residue polypeptide: Dephospho-CoA kinase (212 aa).

The region spanning 6-211 (RLGLTGGIGS…LSCQPLSPNQ (206 aa)) is the DPCK domain. ATP is bound at residue 14 to 19 (GSGKST).

Belongs to the CoaE family.

Its subcellular location is the cytoplasm. The enzyme catalyses 3'-dephospho-CoA + ATP = ADP + CoA + H(+). Its pathway is cofactor biosynthesis; coenzyme A biosynthesis; CoA from (R)-pantothenate: step 5/5. In terms of biological role, catalyzes the phosphorylation of the 3'-hydroxyl group of dephosphocoenzyme A to form coenzyme A. The protein is Dephospho-CoA kinase of Albidiferax ferrireducens (strain ATCC BAA-621 / DSM 15236 / T118) (Rhodoferax ferrireducens).